A 429-amino-acid polypeptide reads, in one-letter code: SH2 domain-containing protein 5 (429 aa).

In terms of domain architecture, SH2 spans 302–398 (WAFAGLSRSC…LSMGRLNPTY (97 aa)).

Interacts with BCR. In terms of tissue distribution, highly expressed in brain, particularly in Purkinjie cells in the cerebellum and the cornu ammonis of the hippocampus.

The protein localises to the postsynaptic density. In terms of biological role, may be involved in synaptic plasticity regulation through the control of Rac-GTP levels. The protein is SH2 domain-containing protein 5 of Mus musculus (Mouse).